A 227-amino-acid chain; its full sequence is Cytochrome c oxidase subunit 2 (227 aa).

Residues 1 to 14 lie on the Mitochondrial intermembrane side of the membrane; it reads MAYPLQMGLQDATS. A helical transmembrane segment spans residues 15–45; that stretch reads PIMEELLHFHDHTLMIVFLISSLVLYIISLM. The Mitochondrial matrix portion of the chain corresponds to 46 to 59; sequence LTTKLTHTSTMDAQ. A helical transmembrane segment spans residues 60–87; sequence EVETVWTILPAIILILIALPSLRILYMM. The Mitochondrial intermembrane segment spans residues 88 to 227; it reads DEINNPSLTV…HFEKWSTSML (140 aa). The Cu cation site is built by His-161, Cys-196, Glu-198, Cys-200, His-204, and Met-207. Glu-198 lines the Mg(2+) pocket.

The protein belongs to the cytochrome c oxidase subunit 2 family. Component of the cytochrome c oxidase (complex IV, CIV), a multisubunit enzyme composed of 14 subunits. The complex is composed of a catalytic core of 3 subunits MT-CO1, MT-CO2 and MT-CO3, encoded in the mitochondrial DNA, and 11 supernumerary subunits COX4I, COX5A, COX5B, COX6A, COX6B, COX6C, COX7A, COX7B, COX7C, COX8 and NDUFA4, which are encoded in the nuclear genome. The complex exists as a monomer or a dimer and forms supercomplexes (SCs) in the inner mitochondrial membrane with NADH-ubiquinone oxidoreductase (complex I, CI) and ubiquinol-cytochrome c oxidoreductase (cytochrome b-c1 complex, complex III, CIII), resulting in different assemblies (supercomplex SCI(1)III(2)IV(1) and megacomplex MCI(2)III(2)IV(2)). Found in a complex with TMEM177, COA6, COX18, COX20, SCO1 and SCO2. Interacts with TMEM177 in a COX20-dependent manner. Interacts with COX20. Interacts with COX16. Requires Cu cation as cofactor.

It is found in the mitochondrion inner membrane. It carries out the reaction 4 Fe(II)-[cytochrome c] + O2 + 8 H(+)(in) = 4 Fe(III)-[cytochrome c] + 2 H2O + 4 H(+)(out). Component of the cytochrome c oxidase, the last enzyme in the mitochondrial electron transport chain which drives oxidative phosphorylation. The respiratory chain contains 3 multisubunit complexes succinate dehydrogenase (complex II, CII), ubiquinol-cytochrome c oxidoreductase (cytochrome b-c1 complex, complex III, CIII) and cytochrome c oxidase (complex IV, CIV), that cooperate to transfer electrons derived from NADH and succinate to molecular oxygen, creating an electrochemical gradient over the inner membrane that drives transmembrane transport and the ATP synthase. Cytochrome c oxidase is the component of the respiratory chain that catalyzes the reduction of oxygen to water. Electrons originating from reduced cytochrome c in the intermembrane space (IMS) are transferred via the dinuclear copper A center (CU(A)) of subunit 2 and heme A of subunit 1 to the active site in subunit 1, a binuclear center (BNC) formed by heme A3 and copper B (CU(B)). The BNC reduces molecular oxygen to 2 water molecules using 4 electrons from cytochrome c in the IMS and 4 protons from the mitochondrial matrix. In Phoca vitulina (Harbor seal), this protein is Cytochrome c oxidase subunit 2 (MT-CO2).